Consider the following 315-residue polypeptide: 2-oxoglutarate and iron-dependent oxygenase domain-containing protein 3 (315 aa).

Residues 1–31 form a disordered region; it reads MAPQRRGPPRIPEGSSAAERRRATSTKKDRL. Residues 1-41 are Cytoplasmic-facing; sequence MAPQRRGPPRIPEGSSAAERRRATSTKKDRLPREAQRTWLR. The span at 18 to 31 shows a compositional bias: basic and acidic residues; that stretch reads AERRRATSTKKDRL. Residues 42–62 form a helical; Signal-anchor for type II membrane protein membrane-spanning segment; sequence IVAFGVGLALVTCLLWSSVGI. Topologically, residues 63–315 are lumenal; it reads DDDVAEVVAR…DHGIEDPVLT (253 aa). One can recognise a Fe2OG dioxygenase domain in the interval 203 to 305; it reads KPTFFSRINS…AITIAFTCNP (103 aa). Asparagine 211 carries an N-linked (GlcNAc...) asparagine glycan. Residues histidine 226 and aspartate 228 each coordinate Fe cation. Asparagine 263 carries an N-linked (GlcNAc...) asparagine glycan. Residue histidine 284 participates in Fe cation binding. Arginine 294 is an active-site residue. Arginine 294 contacts 2-oxoglutarate.

The protein belongs to the OGFOD3 family. Requires Fe(2+) as cofactor. The cofactor is L-ascorbate.

The protein localises to the membrane. This chain is 2-oxoglutarate and iron-dependent oxygenase domain-containing protein 3 (Ogfod3), found in Mus musculus (Mouse).